A 23-amino-acid polypeptide reads, in one-letter code: U3-ctenitoxin-Co1a (23 aa).

2 disulfide bridges follow: Cys-2/Cys-17 and Cys-9/Cys-22.

In terms of tissue distribution, expressed by the venom gland.

Its subcellular location is the secreted. In terms of biological role, antagonist of L-type calcium channels (Cav1/CACNA1). The protein is U3-ctenitoxin-Co1a of Ctenus ornatus (Brazilian spider).